Consider the following 605-residue polypeptide: DNA primase (605 aa).

The segment at 38–62 adopts a CHC2-type zinc-finger fold; it reads CPFHDEKTPSFTVSEDKQICHCFGC. The region spanning 260–341 is the Toprim domain; the sequence is DEIVLLEGFM…NVFVIQLPSG (82 aa). Glutamate 266, aspartate 310, and aspartate 312 together coordinate Mg(2+).

The protein belongs to the DnaG primase family. In terms of assembly, monomer. Interacts with DnaB. Requires Zn(2+) as cofactor. It depends on Mg(2+) as a cofactor.

The catalysed reaction is ssDNA + n NTP = ssDNA/pppN(pN)n-1 hybrid + (n-1) diphosphate.. Functionally, RNA polymerase that catalyzes the synthesis of short RNA molecules used as primers for DNA polymerase during DNA replication. In Staphylococcus aureus (strain Mu50 / ATCC 700699), this protein is DNA primase.